A 354-amino-acid polypeptide reads, in one-letter code: CX3C chemokine receptor 1 (354 aa).

The Extracellular portion of the chain corresponds to 1–32 (MSTSFPELDLENFEYDDSAEACYLGDIVAFGT). The chain crosses the membrane as a helical span at residues 33-60 (IFLSVFYALVFTFGLVGNLLVVLALTNS). The Cytoplasmic portion of the chain corresponds to 61-70 (RKPKSITDIY). Residues 71–91 (LLNLALSDLLFVATLPFWTHY) form a helical membrane-spanning segment. Over 92–104 (LISHEGLHNAMCK) the chain is Extracellular. Cysteines 103 and 176 form a disulfide. Residues 105 to 126 (LTTAFFFIGFFGGIFFITVISI) traverse the membrane as a helical segment. Topologically, residues 127 to 143 (DRYLAIVLAANSMNNRT) are cytoplasmic. A helical membrane pass occupies residues 144–168 (VQHGVTISLGVWAAAILVASPQFMF). The Extracellular portion of the chain corresponds to 169–196 (TKRKDNECLGDYPEVLQEMWPVLRNSEV). A helical membrane pass occupies residues 197–216 (NILGFALPLLIMSFCYFRII). Topologically, residues 217–232 (QTLFSCKNRKKARAVR) are cytoplasmic. The helical transmembrane segment at 233 to 257 (LILLVVFAFFLFWTPYNIMIFLETL) threads the bilayer. The Extracellular segment spans residues 258–274 (KFYNFFPSCDMKRDLRL). The helical transmembrane segment at 275–298 (ALSVTETVAFSHCCLNPFIYAFAG) threads the bilayer. The Cytoplasmic segment spans residues 299 to 354 (EKFRRYLGHLYRKCLAVLCGHPVHTGFSPESQRSRQDSILSSFTHYTSEGDGSLLL). The residue at position 345 (T345) is a Phosphothreonine.

The protein belongs to the G-protein coupled receptor 1 family. In terms of assembly, found in a ternary complex with CX3CL1 and ITGAV:ITGB3 or ITGA4:ITGB1. This protein is not N-glycosylated which is unusual for G-protein-coupled receptors. Specifically expressed in subsets of leukocytes: expressed in monocytes, subsets of T-cells and natural killer (NK) cells in the circulation, dendritic cells, as well as in microglia in the central nervous system (CNS). Expression level subdivides blood monocytes into two major functional subsets; CD14(+)CD16(-)-CX3CR1(low) inflammatory monocytes and CD14(low)CD16(+)CX3CR1(high) homeostatic monocytes. Expressed in myeloid-derived mucosal dendritic cells, which populate the entire lamina propria of the small intestine.

The protein resides in the cell membrane. Its function is as follows. Receptor for the C-X3-C chemokine fractalkine (CX3CL1) present on many early leukocyte cells; CX3CR1-CX3CL1 signaling exerts distinct functions in different tissue compartments, such as immune response, inflammation, cell adhesion and chemotaxis. CX3CR1-CX3CL1 signaling mediates cell migratory functions. Responsible for the recruitment of natural killer (NK) cells to inflamed tissues. Acts as a regulator of inflammation process leading to atherogenesis by mediating macrophage and monocyte recruitment to inflamed atherosclerotic plaques, promoting cell survival. Involved in airway inflammation by promoting interleukin 2-producing T helper (Th2) cell survival in inflamed lung. Involved in the migration of circulating monocytes to non-inflamed tissues, where they differentiate into macrophages and dendritic cells. Acts as a negative regulator of angiogenesis, probably by promoting macrophage chemotaxis. Plays a key role in brain microglia by regulating inflammatory response in the central nervous system (CNS) and regulating synapse maturation. Required to restrain the microglial inflammatory response in the CNS and the resulting parenchymal damage in response to pathological stimuli. Involved in brain development by participating in synaptic pruning, a natural process during which brain microglia eliminates extra synapses during postnatal development. Synaptic pruning by microglia is required to promote the maturation of circuit connectivity during brain development. Acts as an important regulator of the gut microbiota by controlling immunity to intestinal bacteria and fungi. Expressed in lamina propria dendritic cells in the small intestine, which form transepithelial dendrites capable of taking up bacteria in order to provide defense against pathogenic bacteria. Required to initiate innate and adaptive immune responses against dissemination of commensal fungi (mycobiota) component of the gut: expressed in mononuclear phagocytes (MNPs) and acts by promoting induction of antifungal IgG antibodies response to confer protection against disseminated C.albicans or C.auris infection. Also acts as a receptor for C-C motif chemokine CCL26, inducing cell chemotaxis. The sequence is that of CX3C chemokine receptor 1 from Mus musculus (Mouse).